We begin with the raw amino-acid sequence, 440 residues long: D-serine dehydratase (440 aa).

Lysine 116 carries the N6-(pyridoxal phosphate)lysine modification.

The protein belongs to the serine/threonine dehydratase family. DsdA subfamily. As to quaternary structure, monomer. Pyridoxal 5'-phosphate serves as cofactor.

It catalyses the reaction D-serine = pyruvate + NH4(+). This Salmonella typhimurium (strain LT2 / SGSC1412 / ATCC 700720) protein is D-serine dehydratase.